Consider the following 235-residue polypeptide: Proteasome subunit alpha type-2-A (235 aa).

A Glycyl lysine isopeptide (Lys-Gly) (interchain with G-Cter in ubiquitin) cross-link involves residue Lys-64.

The protein belongs to the peptidase T1A family. As to quaternary structure, component of the 20S core complex of the 26S proteasome. The 26S proteasome is composed of a core protease (CP), known as the 20S proteasome, capped at one or both ends by the 19S regulatory particle (RP/PA700). The 20S proteasome core is composed of 28 subunits that are arranged in four stacked rings, resulting in a barrel-shaped structure. The two end rings are each formed by seven alpha subunits, and the two central rings are each formed by seven beta subunits. The catalytic chamber with the active sites is on the inside of the barrel.

It is found in the cytoplasm. The protein resides in the nucleus. Functionally, the proteasome is a multicatalytic proteinase complex which is characterized by its ability to cleave peptides with Arg, Phe, Tyr, Leu, and Glu adjacent to the leaving group at neutral or slightly basic pH. The proteasome has an ATP-dependent proteolytic activity. The sequence is that of Proteasome subunit alpha type-2-A (PAB1) from Arabidopsis thaliana (Mouse-ear cress).